The sequence spans 131 residues: Riboflavin kinase (131 aa).

11–16 (GLQKAG) contacts CDP. Mg(2+) contacts are provided by Thr-40 and Asn-42. Residues Thr-98 and Glu-106 each contribute to the FMN site. 111–114 (EKLR) serves as a coordination point for CDP.

It belongs to the archaeal riboflavin kinase family. The cofactor is Mg(2+).

The catalysed reaction is riboflavin + CTP = CDP + FMN + H(+). It participates in cofactor biosynthesis; FMN biosynthesis; FMN from riboflavin (CTP route): step 1/1. Its function is as follows. Catalyzes the CTP-dependent phosphorylation of riboflavin (vitamin B2) to form flavin mononucleotide (FMN). This is Riboflavin kinase from Methanosphaera stadtmanae (strain ATCC 43021 / DSM 3091 / JCM 11832 / MCB-3).